Consider the following 442-residue polypeptide: Xaa-Pro dipeptidase (442 aa).

Positions 245, 256, 338, 383, and 422 each coordinate Mn(2+).

It belongs to the peptidase M24B family. Bacterial-type prolidase subfamily. Requires Mn(2+) as cofactor.

It catalyses the reaction Xaa-L-Pro dipeptide + H2O = an L-alpha-amino acid + L-proline. Functionally, splits dipeptides with a prolyl residue in the C-terminal position. The chain is Xaa-Pro dipeptidase from Sodalis glossinidius (strain morsitans).